The sequence spans 565 residues: Putative lipase ATG15 (565 aa).

Topologically, residues 1–21 (MISNDYTKFSSKRRSLRYSNR) are cytoplasmic. The chain crosses the membrane as a helical; Signal-anchor for type II membrane protein span at residues 22–42 (ILLLMGTILLIVVYFYSDILV). At 43-565 (DKSIIMFRNE…EYTTFTKRLI (523 aa)) the chain is on the lumenal side. N-linked (GlcNAc...) asparagine glycosylation is present at Asn-217. Ser-347 (charge relay system) is an active-site residue. The disordered stretch occupies residues 488 to 538 (KKPKKQTTSSSSEKVDTSTTKSIDRTTITTRTNEKKWHPNPKDPSTTTTDD). The segment covering 493–518 (QTTSSSSEKVDTSTTKSIDRTTITTR) has biased composition (low complexity). The span at 519–528 (TNEKKWHPNP) shows a compositional bias: basic and acidic residues.

This sequence belongs to the AB hydrolase superfamily. Lipase family. In terms of assembly, binds to both phosphatidylinositol (PI) and phosphatidylinositol 3,5-bisphosphate (PIP2).

The protein localises to the endosome. The protein resides in the multivesicular body membrane. It localises to the prevacuolar compartment membrane. The enzyme catalyses a triacylglycerol + H2O = a diacylglycerol + a fatty acid + H(+). Functionally, lipase which is essential for lysis of subvacuolar cytoplasm to vacuole targeted bodies and intravacuolar autophagic bodies. Involved in the lysis of intravacuolar multivesicular body (MVB) vesicles. The intravacuolar membrane disintegration by ATG15 is critical to life span extension. This is Putative lipase ATG15 (ATG15) from Vanderwaltozyma polyspora (strain ATCC 22028 / DSM 70294 / BCRC 21397 / CBS 2163 / NBRC 10782 / NRRL Y-8283 / UCD 57-17) (Kluyveromyces polysporus).